Reading from the N-terminus, the 268-residue chain is Glutamate racemase (268 aa).

Residues 9–10 (DS) and 41–42 (YG) contribute to the substrate site. Residue Cys-73 is the Proton donor/acceptor of the active site. 74 to 75 (NS) contacts substrate. Cys-183 acts as the Proton donor/acceptor in catalysis. 184–185 (TH) is a binding site for substrate.

The protein belongs to the aspartate/glutamate racemases family.

The catalysed reaction is L-glutamate = D-glutamate. The protein operates within cell wall biogenesis; peptidoglycan biosynthesis. In terms of biological role, provides the (R)-glutamate required for cell wall biosynthesis. The polypeptide is Glutamate racemase (Shewanella piezotolerans (strain WP3 / JCM 13877)).